Reading from the N-terminus, the 74-residue chain is uncharacterized protein (74 aa).

This is an uncharacterized protein from Dictyostelium discoideum (Social amoeba).